Consider the following 64-residue polypeptide: Defensin-like protein 123 (64 aa).

4 disulfides stabilise this stretch: C19/C62, C29/C49, C34/C56, and C38/C58.

The protein belongs to the DEFL family.

This Arabidopsis thaliana (Mouse-ear cress) protein is Defensin-like protein 123.